The following is a 339-amino-acid chain: Transcription initiation factor IIB (339 aa).

The TFIIB-type zinc-finger motif lies at 39–70; it reads EELICPVCGSKSIIKDYERAEIVCEMCGCVLQ. 4 residues coordinate Zn(2+): Cys-43, Cys-46, Cys-62, and Cys-65. A run of 2 repeats spans residues 156–239 and 250–331.

It belongs to the TFIIB family.

Stabilizes TBP binding to an archaeal box-A promoter. Also responsible for recruiting RNA polymerase II to the pre-initiation complex (DNA-TBP-TFIIB). The sequence is that of Transcription initiation factor IIB from Methanococcus maripaludis (strain DSM 14266 / JCM 13030 / NBRC 101832 / S2 / LL).